The chain runs to 131 residues: Protein Turandot M (131 aa).

The first 23 residues, Met-1–Ala-23, serve as a signal peptide directing secretion.

Belongs to the Turandot family.

It is found in the secreted. A humoral factor that may play a role in stress tolerance. Requires Mekk1 expression in the fat body to regulate response to septic injury and consequent immune response. This is Protein Turandot M from Drosophila melanogaster (Fruit fly).